The following is a 310-amino-acid chain: Forkhead box protein pes-1 (310 aa).

The segment covering 1–16 (MLPLSISTSPDPASQF) has biased composition (polar residues). 4 disordered regions span residues 1–37 (MLPLSISTSPDPASQFPTVPDLPTLTPTPSPTSGTAK), 58–77 (VSPSSTGLLEPKSSTVSPAP), 92–126 (KQSSSGVSSTRTSSLEPKSSAVSPAPSSPEASNPN), and 217–242 (SLRRKKNGKPRKYSKRSNTVSNPNPI). The span at 17 to 35 (PTVPDLPTLTPTPSPTSGT) shows a compositional bias: low complexity. The fork-head DNA-binding region spans 128–220 (RPAYSYNALI…IGKDCGSLRR (93 aa)). Positions 218 to 231 (LRRKKNGKPRKYSK) are enriched in basic residues.

It localises to the nucleus. The protein resides in the cytoplasm. In terms of biological role, transcription factor. Plays a role in embryogenesis and later development, perhaps acting redundantly with forkhead protein fkh-2. The sequence is that of Forkhead box protein pes-1 from Caenorhabditis briggsae.